We begin with the raw amino-acid sequence, 61 residues long: Small ribosomal subunit protein uS14 (61 aa).

Zn(2+) contacts are provided by Cys-24, Cys-27, Cys-40, and Cys-43.

This sequence belongs to the universal ribosomal protein uS14 family. Zinc-binding uS14 subfamily. In terms of assembly, part of the 30S ribosomal subunit. Contacts proteins S3 and S10. Zn(2+) is required as a cofactor.

Functionally, binds 16S rRNA, required for the assembly of 30S particles and may also be responsible for determining the conformation of the 16S rRNA at the A site. In Endomicrobium trichonymphae, this protein is Small ribosomal subunit protein uS14.